The following is a 258-amino-acid chain: Isoprenyl transferase 2 (258 aa).

Residue Asp39 is part of the active site. Asp39 provides a ligand contact to Mg(2+). Substrate-binding positions include 40-43 (GNRR), Trp44, Arg52, His57, and 85-87 (SND). Residue Asn88 is the Proton acceptor of the active site. Residues Arg92, Arg207, and 213–215 (RLS) each bind substrate. A Mg(2+)-binding site is contributed by Glu226.

Belongs to the UPP synthase family. As to quaternary structure, homodimer. The cofactor is Mg(2+).

In terms of biological role, catalyzes the condensation of isopentenyl diphosphate (IPP) with allylic pyrophosphates generating different type of terpenoids. This is Isoprenyl transferase 2 from Tropheryma whipplei (strain Twist) (Whipple's bacillus).